The primary structure comprises 197 residues: Probable molybdenum cofactor guanylyltransferase (197 aa).

GTP contacts are provided by residues L9–G11, K21, D65, and D94. A Mg(2+)-binding site is contributed by D94.

The protein belongs to the MobA family. Requires Mg(2+) as cofactor.

The protein resides in the cytoplasm. The catalysed reaction is Mo-molybdopterin + GTP + H(+) = Mo-molybdopterin guanine dinucleotide + diphosphate. In terms of biological role, transfers a GMP moiety from GTP to Mo-molybdopterin (Mo-MPT) cofactor (Moco or molybdenum cofactor) to form Mo-molybdopterin guanine dinucleotide (Mo-MGD) cofactor. The protein is Probable molybdenum cofactor guanylyltransferase of Carboxydothermus hydrogenoformans (strain ATCC BAA-161 / DSM 6008 / Z-2901).